A 429-amino-acid chain; its full sequence is Glutamate-1-semialdehyde 2,1-aminomutase 2 (429 aa).

The residue at position 268 (K268) is an N6-(pyridoxal phosphate)lysine.

This sequence belongs to the class-III pyridoxal-phosphate-dependent aminotransferase family. HemL subfamily. In terms of assembly, homodimer. It depends on pyridoxal 5'-phosphate as a cofactor.

The protein resides in the cytoplasm. It catalyses the reaction (S)-4-amino-5-oxopentanoate = 5-aminolevulinate. It functions in the pathway porphyrin-containing compound metabolism; protoporphyrin-IX biosynthesis; 5-aminolevulinate from L-glutamyl-tRNA(Glu): step 2/2. The chain is Glutamate-1-semialdehyde 2,1-aminomutase 2 from Halalkalibacterium halodurans (strain ATCC BAA-125 / DSM 18197 / FERM 7344 / JCM 9153 / C-125) (Bacillus halodurans).